Reading from the N-terminus, the 505-residue chain is Beta-agarase (505 aa).

Residues 1-23 (MLKVIPWLLVTSSLVAIPTYIHA) form the signal peptide. The active-site Proton donor is glutamate 200. Glutamate 322 (nucleophile) is an active-site residue.

It belongs to the glycosyl hydrolase 86 family.

The protein resides in the secreted. The enzyme catalyses Hydrolysis of (1-&gt;4)-beta-D-galactosidic linkages in agarose, giving the tetramer as the predominant product.. Hydrolase that cleaves agar at the (1-&gt;4) linkage, producing tetrameric saccharide molecules. Is specific for agar and agarose and does not digest alginate or carrageenan. The sequence is that of Beta-agarase from Pseudoalteromonas atlantica (Alteromonas atlantica).